Here is a 163-residue protein sequence, read N- to C-terminus: NADH-quinone oxidoreductase subunit I (163 aa).

2 consecutive 4Fe-4S ferredoxin-type domains span residues 54–84 (LRRY…IDSA) and 94–123 (TRYD…ETHI). Cysteine 64, cysteine 67, cysteine 70, cysteine 74, cysteine 103, cysteine 106, cysteine 109, and cysteine 113 together coordinate [4Fe-4S] cluster.

Belongs to the complex I 23 kDa subunit family. In terms of assembly, NDH-1 is composed of 14 different subunits. Subunits NuoA, H, J, K, L, M, N constitute the membrane sector of the complex. [4Fe-4S] cluster is required as a cofactor.

It localises to the cell inner membrane. The enzyme catalyses a quinone + NADH + 5 H(+)(in) = a quinol + NAD(+) + 4 H(+)(out). Its function is as follows. NDH-1 shuttles electrons from NADH, via FMN and iron-sulfur (Fe-S) centers, to quinones in the respiratory chain. The immediate electron acceptor for the enzyme in this species is believed to be ubiquinone. Couples the redox reaction to proton translocation (for every two electrons transferred, four hydrogen ions are translocated across the cytoplasmic membrane), and thus conserves the redox energy in a proton gradient. This chain is NADH-quinone oxidoreductase subunit I, found in Xylella fastidiosa (strain 9a5c).